The following is a 1025-amino-acid chain: Serine/threonine-protein kinase TAO2 (1025 aa).

One can recognise a Protein kinase domain in the interval 28–281 (FADLREIGHG…SDMLLKHRFL (254 aa)). ATP is bound by residues 34–42 (IGHGSFGAV) and Lys-57. Asp-151 (proton acceptor) is an active-site residue. A compositionally biased stretch (low complexity) spans 349–373 (ESSQSVPSMSISASSQSSSVNSLAD). The tract at residues 349–377 (ESSQSVPSMSISASSQSSSVNSLADASDD) is disordered. Coiled-coil stretches lie at residues 457–650 (SALR…ECAM) and 755–876 (ILKR…EIEA). Disordered stretches follow at residues 899–930 (FNQG…QNTG) and 945–1025 (SASW…LSYS). Over residues 905 to 914 (APPPGWPSRP) the composition is skewed to pro residues. Residues 947–986 (SWGLHPPGSSSSLSALPSSSSSSSSSPSSSSGGRPGLLLL) are compositionally biased toward low complexity. Positions 1007-1025 (SRSTSVTSQLSNGSHLSYS) are enriched in polar residues.

It belongs to the protein kinase superfamily. STE Ser/Thr protein kinase family. STE20 subfamily. Mg(2+) serves as cofactor.

It carries out the reaction L-seryl-[protein] + ATP = O-phospho-L-seryl-[protein] + ADP + H(+). The enzyme catalyses L-threonyl-[protein] + ATP = O-phospho-L-threonyl-[protein] + ADP + H(+). In terms of biological role, serine/threonine-protein kinase involved in different processes such as apoptotic morphological changes, MAPK8/JNK and MAPK14/p38 MAPK signaling pathway. Functionally, activates the JNK MAP kinase pathway. The polypeptide is Serine/threonine-protein kinase TAO2 (taok2) (Xenopus laevis (African clawed frog)).